The following is a 931-amino-acid chain: Short transient receptor potential channel 6 (931 aa).

The interval 1 to 24 (MNQSPAAFGPRRGGSPAVVAGAGA) is disordered. The Cytoplasmic portion of the chain corresponds to 1–406 (MNQSPAAFGP…GLRQQTMAVK (406 aa)). Residues 13 to 24 (GGSPAVVAGAGA) show a composition bias toward low complexity. ANK repeat units follow at residues 131-160 (MGQN…LSRV), 162-188 (DALL…FAEG), and 217-246 (HDVT…RIER). The chain crosses the membrane as a helical span at residues 407-427 (FLVVLAVAVGLPFLALVYWFA). The Extracellular segment spans residues 428–438 (PCSKMGKIMRG). Residues 439–459 (PFMKFVAHAASFTIFLGLLVM) traverse the membrane as a helical segment. Residues 460 to 487 (NAADRFEGTKILPNETSTDHAKQLFRMK) lie on the Cytoplasmic side of the membrane. Residues 488 to 508 (TSCFSWMEMLIISWVIGMIWA) form a helical membrane-spanning segment. At 509-521 (ECKEIWTQGPKEY) the chain is on the extracellular side. Residues 522-542 (LFELWNMLDFGMLAIFAASFI) form a helical membrane-spanning segment. Topologically, residues 543 to 592 (ARFMAFWHASKAQSIIDANDTLKDLTKVTLGDNVKYYNLARIKWDPSDPQ) are cytoplasmic. A helical membrane pass occupies residues 593–613 (IISEGLYAIAVVLSFSRIAYI). At 614–636 (LPANESFGPLQISLGRTVKDIFK) the chain is on the extracellular side. Asn-617 carries N-linked (GlcNAc...) asparagine glycosylation. The stretch at 618 to 647 (ESFGPLQISLGRTVKDIFKFMVIFIMVFVA) is one ANK 4 repeat. Residues 637–657 (FMVIFIMVFVAFMIGMFNLYS) form a helical membrane-spanning segment. The Cytoplasmic segment spans residues 658–674 (YYIGAKQNEAFTTVEES). Residues 675-695 (FKTLFWAIFGLSEVKSVVINY) form a helical membrane-spanning segment. Residues 696–706 (NHKFIENIGYV) are Extracellular-facing. Residues 707–727 (LYGVYNVTMVIVLLNMLIAMI) form a helical membrane-spanning segment. Topologically, residues 728 to 931 (NSSFQEIEDD…MEPNQEESNR (204 aa)) are cytoplasmic. Phosphoserine is present on Ser-815.

Belongs to the transient receptor (TC 1.A.4) family. STrpC subfamily. TRPC6 sub-subfamily. Homodimer; forms channel complex. Interacts with MX1 and RNF24. In terms of processing, phosphorylated by FYN, leading to an increase of TRPC6 channel activity.

The protein resides in the cell membrane. The enzyme catalyses Ca(2+)(in) = Ca(2+)(out). Thought to form a receptor-activated non-selective calcium permeant cation channel. Probably is operated by a phosphatidylinositol second messenger system activated by receptor tyrosine kinases or G-protein coupled receptors. Activated by diacylglycerol (DAG) in a membrane-delimited fashion, independently of protein kinase C. Seems not to be activated by intracellular calcium store depletion. This Bos taurus (Bovine) protein is Short transient receptor potential channel 6.